The chain runs to 332 residues: Malate dehydrogenase, cytoplasmic (332 aa).

NAD(+) contacts are provided by residues 11–17 (GAAGQIA) and Asp42. Residues Arg92 and Arg98 each contribute to the substrate site. Residues Asn105, Gln112, and 129-131 (VGN) contribute to the NAD(+) site. Positions 131 and 162 each coordinate substrate. His187 serves as the catalytic Proton acceptor.

This sequence belongs to the LDH/MDH superfamily. MDH type 2 family. As to quaternary structure, homodimer.

Its subcellular location is the cytoplasm. It catalyses the reaction (S)-malate + NAD(+) = oxaloacetate + NADH + H(+). By arsenate for both the forward and reverse reactions. Malate dehydrogenase. Has no activity with NADPH as substrate. Does not show lactate dehydrogenase activity. This Taenia solium (Pork tapeworm) protein is Malate dehydrogenase, cytoplasmic.